The following is a 545-amino-acid chain: Ubiquitin carboxyl-terminal hydrolase 17-like protein D (545 aa).

The USP domain maps to 51–348 (CGLQNTGNSC…NAYVLFYVQQ (298 aa)). The active-site Nucleophile is cysteine 60. Residue histidine 307 is the Proton acceptor of the active site. Disordered regions lie at residues 367 to 443 (LDPE…KLGQ) and 521 to 545 (RQEG…LLVR). Over residues 374–385 (KKSRRKKHKKKS) the composition is skewed to basic residues. Residues 393–404 (EPSKNREKKATK) show a composition bias toward basic and acidic residues. Basic residues predominate over residues 524–537 (GRRRSKKGKNKNKQ).

The protein belongs to the peptidase C19 family. USP17 subfamily. In terms of tissue distribution, detected in T-cell, myeloid, and embryonic stem cell lines.

It is found in the nucleus. The protein localises to the endoplasmic reticulum. The enzyme catalyses Thiol-dependent hydrolysis of ester, thioester, amide, peptide and isopeptide bonds formed by the C-terminal Gly of ubiquitin (a 76-residue protein attached to proteins as an intracellular targeting signal).. Deubiquitinating enzyme that removes conjugated ubiquitin from specific proteins to regulate different cellular processes that may include cell proliferation, progression through the cell cycle, apoptosis, cell migration, and the cellular response to viral infection. In Mus musculus (Mouse), this protein is Ubiquitin carboxyl-terminal hydrolase 17-like protein D.